The primary structure comprises 688 residues: Polyribonucleotide nucleotidyltransferase (688 aa).

Positions 484 and 490 each coordinate Mg(2+). The KH domain maps to 550–609 (PTTEIFNVAPDKIVEIIGQGGRVIKEIVEKFEVKIDLNKPSGEVKIMGNKERVLKTKEFI). Residues 626–688 (DEVLEAQVKR…NKGKIALDLA (63 aa)) enclose the S1 motif domain.

Belongs to the polyribonucleotide nucleotidyltransferase family. Mg(2+) is required as a cofactor.

It is found in the cytoplasm. The catalysed reaction is RNA(n+1) + phosphate = RNA(n) + a ribonucleoside 5'-diphosphate. Involved in mRNA degradation. Catalyzes the phosphorolysis of single-stranded polyribonucleotides processively in the 3'- to 5'-direction. The protein is Polyribonucleotide nucleotidyltransferase of Helicobacter pylori (strain HPAG1).